The following is a 227-amino-acid chain: 2-C-methyl-D-erythritol 4-phosphate cytidylyltransferase (227 aa).

It belongs to the IspD/TarI cytidylyltransferase family. IspD subfamily.

It catalyses the reaction 2-C-methyl-D-erythritol 4-phosphate + CTP + H(+) = 4-CDP-2-C-methyl-D-erythritol + diphosphate. It participates in isoprenoid biosynthesis; isopentenyl diphosphate biosynthesis via DXP pathway; isopentenyl diphosphate from 1-deoxy-D-xylulose 5-phosphate: step 2/6. In terms of biological role, catalyzes the formation of 4-diphosphocytidyl-2-C-methyl-D-erythritol from CTP and 2-C-methyl-D-erythritol 4-phosphate (MEP). In Bordetella parapertussis (strain 12822 / ATCC BAA-587 / NCTC 13253), this protein is 2-C-methyl-D-erythritol 4-phosphate cytidylyltransferase.